The primary structure comprises 140 residues: Nucleoside diphosphate kinase (140 aa).

6 residues coordinate ATP: lysine 11, phenylalanine 59, arginine 87, threonine 93, arginine 104, and asparagine 114. The Pros-phosphohistidine intermediate role is filled by histidine 117.

It belongs to the NDK family. Homotetramer. Mg(2+) is required as a cofactor.

It localises to the cytoplasm. The enzyme catalyses a 2'-deoxyribonucleoside 5'-diphosphate + ATP = a 2'-deoxyribonucleoside 5'-triphosphate + ADP. The catalysed reaction is a ribonucleoside 5'-diphosphate + ATP = a ribonucleoside 5'-triphosphate + ADP. In terms of biological role, major role in the synthesis of nucleoside triphosphates other than ATP. The ATP gamma phosphate is transferred to the NDP beta phosphate via a ping-pong mechanism, using a phosphorylated active-site intermediate. The protein is Nucleoside diphosphate kinase of Rhizobium etli (strain CIAT 652).